A 380-amino-acid polypeptide reads, in one-letter code: Enoyl-[acyl-carrier-protein] reductase, mitochondrial (380 aa).

The transit peptide at 1–9 (MLPTFKRYM) directs the protein to the mitochondrion. The Proton donor role is filled by tyrosine 73. NADP(+)-binding positions include asparagine 157, 185-188 (TSSV), 208-210 (RDR), 283-286 (YGGM), and 308-310 (YWV). Serine 339 carries the post-translational modification Phosphoserine. Lysine 373 contributes to the NADP(+) binding site.

This sequence belongs to the zinc-containing alcohol dehydrogenase family. Quinone oxidoreductase subfamily. Homodimer or in a complex with other proteins. Interacts with ARS1.

It localises to the mitochondrion matrix. The catalysed reaction is a 2,3-saturated acyl-[ACP] + NADP(+) = a (2E)-enoyl-[ACP] + NADPH + H(+). It catalyses the reaction (2E,4E)-hexadienoyl-CoA + NADPH + H(+) = (4E)-hexenoyl-CoA + NADP(+). The enzyme catalyses (2E)-hexenoyl-CoA + NADPH + H(+) = hexanoyl-CoA + NADP(+). In terms of biological role, catalyzes the NADPH-dependent reduction of trans-2-enoyl thioesters in mitochondrial fatty acid synthesis (fatty acid synthesis type II). Fatty acid chain elongation in mitochondria uses acyl carrier protein (ACP) as an acyl group carrier, but the enzyme accepts both ACP and CoA thioesters as substrates in vitro. Required for respiration and the maintenance of the mitochondrial compartment. The protein is Enoyl-[acyl-carrier-protein] reductase, mitochondrial (ETR1) of Saccharomyces cerevisiae (strain ATCC 204508 / S288c) (Baker's yeast).